A 209-amino-acid polypeptide reads, in one-letter code: MNVIKIALAKGRLADQSVKLLESIGIDCGPLLDKGRKLIVALPKDHLEVVFVKAPDVPTYVEHGAVDMGIVGKDVLLEANKQLYEVLDLQFGKCKFSVAGSTSMENYPTPHMRVATKYPNIAKNFFQSKGQSVEIIKQEGSVELAPMVGLADVIVDIVETGNTLRENGLMVFEDIVEISARLVLNQVSYKTKHQEIRGLIDRIAEKTGK.

It belongs to the ATP phosphoribosyltransferase family. Short subfamily. In terms of assembly, heteromultimer composed of HisG and HisZ subunits.

Its subcellular location is the cytoplasm. It carries out the reaction 1-(5-phospho-beta-D-ribosyl)-ATP + diphosphate = 5-phospho-alpha-D-ribose 1-diphosphate + ATP. It participates in amino-acid biosynthesis; L-histidine biosynthesis; L-histidine from 5-phospho-alpha-D-ribose 1-diphosphate: step 1/9. Functionally, catalyzes the condensation of ATP and 5-phosphoribose 1-diphosphate to form N'-(5'-phosphoribosyl)-ATP (PR-ATP). Has a crucial role in the pathway because the rate of histidine biosynthesis seems to be controlled primarily by regulation of HisG enzymatic activity. The polypeptide is ATP phosphoribosyltransferase (Alkaliphilus metalliredigens (strain QYMF)).